The primary structure comprises 116 residues: Large ribosomal subunit protein bL17 (116 aa).

This sequence belongs to the bacterial ribosomal protein bL17 family. As to quaternary structure, part of the 50S ribosomal subunit. Contacts protein L32.

The polypeptide is Large ribosomal subunit protein bL17 (Synechococcus sp. (strain CC9311)).